The primary structure comprises 329 residues: MQTLAENLTSQAISPTLEKLILTLANTSKEISHAVRHGALAGVLGATEQENVQGETQKKLDIITNDMLKDALKADGTVRGIASEEEDYVVEADANGEFLVCFDPLDGSSNIDINSLVGTIFSVLPAPAGELTEKSFLQAGRNQVAAGYVLYGPSTMLALTTGQGVQLFTLNPETNEFLLTNGAMAISKDTGEFAINMSNQRFWEAPMQTYISDLLLGKIGPREKSFNMRWIAAMVGDVHRVLCRGGIFTYPTDNKNPEKPYKLRLMYEANPMAFLVEQAGGKASTGYETIMDIQPTEIHQRVAVILGSANEVDACLEYHGIDYSEEPVL.

Glu-84, Asp-103, Leu-105, and Asp-106 together coordinate Mg(2+). Substrate contacts are provided by residues 106–109 (DGSS), Asn-196, and Lys-262. Residue Glu-268 participates in Mg(2+) binding.

The protein belongs to the FBPase class 1 family. As to quaternary structure, homotetramer. Requires Mg(2+) as cofactor.

The protein localises to the cytoplasm. The enzyme catalyses beta-D-fructose 1,6-bisphosphate + H2O = beta-D-fructose 6-phosphate + phosphate. Its pathway is carbohydrate biosynthesis; gluconeogenesis. In Shewanella pealeana (strain ATCC 700345 / ANG-SQ1), this protein is Fructose-1,6-bisphosphatase class 1.